Consider the following 297-residue polypeptide: Vacuolar protein sorting-associated protein 26C (297 aa).

It belongs to the VPS26 family. Component of the commander complex that is essential for endosomal recycling of transmembrane cargos; the commander complex is composed of the CCC subcomplex and the retriever subcomplex. Component of the heterotrimeric retriever complex consisting of VPS26C, VPS29 and VPS35L; within the complex interacts with VPS35L. Interacts with SNX17 (via C-terminus); the interaction is direct and associates SNX17 with the retriever complex. Interacts with SNX31; the interaction is direct.

It localises to the endosome. In terms of biological role, component of the commander complex that is essential for endosomal recycling of transmembrane cargos; the commander complex is composed of the CCC subcomplex and the retriever subcomplex. Component of the retriever complex, which is a heterotrimeric complex related to retromer cargo-selective complex (CSC) and essential for retromer-independent retrieval and recycling of numerous cargos such as integrin alpha-5/beta-1 (ITGA5:ITGB1). The recruitment of the retriever complex to the endosomal membrane involves CCC and WASH complexes. In the endosomes, drives the retriever and recycling of NxxY-motif-containing cargo proteins by coupling to SNX17, a cargo essential for the homeostatic maintenance of numerous cell surface proteins associated with processes that include cell migration, cell adhesion, nutrient supply and cell signaling. In Pongo abelii (Sumatran orangutan), this protein is Vacuolar protein sorting-associated protein 26C (VPS26C).